The sequence spans 158 residues: NAD(P)H-quinone oxidoreductase subunit J, chloroplastic (158 aa).

It belongs to the complex I 30 kDa subunit family. As to quaternary structure, NDH is composed of at least 16 different subunits, 5 of which are encoded in the nucleus.

It is found in the plastid. The protein localises to the chloroplast thylakoid membrane. It catalyses the reaction a plastoquinone + NADH + (n+1) H(+)(in) = a plastoquinol + NAD(+) + n H(+)(out). The catalysed reaction is a plastoquinone + NADPH + (n+1) H(+)(in) = a plastoquinol + NADP(+) + n H(+)(out). NDH shuttles electrons from NAD(P)H:plastoquinone, via FMN and iron-sulfur (Fe-S) centers, to quinones in the photosynthetic chain and possibly in a chloroplast respiratory chain. The immediate electron acceptor for the enzyme in this species is believed to be plastoquinone. Couples the redox reaction to proton translocation, and thus conserves the redox energy in a proton gradient. This is NAD(P)H-quinone oxidoreductase subunit J, chloroplastic from Morus indica (Mulberry).